The chain runs to 119 residues: Probable non-functional T cell receptor gamma variable 11 (119 aa).

The first 18 residues, 1-18 (MPLVVAVIFFSLWVFALG), serve as a signal peptide directing secretion. Residues 23–119 (PEISISRPAN…VYHCACWIRH (97 aa)) enclose the Ig-like domain. N-linked (GlcNAc...) asparagine glycosylation occurs at N32.

As to quaternary structure, most probably, the gamma-delta TR is not assembled due to incorrect folding of the gamma chain. Gamma-delta TR is a heterodimer composed of a gamma and delta chain; disulfide-linked. The gamma-delta TR is associated with the transmembrane signaling CD3 coreceptor proteins following the stoichiometry: a single gamma-delta TR heterodimer associates with one CD3D-CD3E heterodimer, one CD3G-CD3E heterodimer and one CD247 homodimer forming a stable octameric structure. Upon activation, gamma-delta TR complex associates with FCER1G to initiate intracellular signaling.

The protein resides in the cell membrane. Probable non-functional open reading frame (ORF) of V region of the variable domain of T cell receptor (TR) gamma chain. Non-functional ORF generally cannot participate in the synthesis of a productive T cell receptor (TR) chain due to altered V-(D)-J or switch recombination and/or splicing site (at mRNA level) and/or conserved amino acid change (protein level). Gamma-delta TRs recognize a variety of self and foreign non-peptide antigens frequently expressed at the epithelial boundaries between the host and external environment, including endogenous lipids presented by MH-like protein CD1D and phosphoantigens presented by butyrophilin-like molecule BTN3A1. Upon antigen recognition induces rapid, innate-like immune responses involved in pathogen clearance and tissue repair. Binding of gamma-delta TR complex to antigen triggers phosphorylation of immunoreceptor tyrosine-based activation motifs (ITAMs) in the CD3 chains by the LCK and FYN kinases, allowing the recruitment, phosphorylation, and activation of ZAP70 that facilitates phosphorylation of the scaffolding proteins LCP2 and LAT. This lead to the formation of a supramolecular signalosome that recruits the phospholipase PLCG1, resulting in calcium mobilization and ERK activation, ultimately leading to T cell expansion and differentiation into effector cells. Gamma-delta TRs are produced through somatic rearrangement of a limited repertoire of variable (V), diversity (D), and joining (J) genes. The potential diversity of gamma-delta TRs is conferred by the unique ability to rearrange (D) genes in tandem and to utilize all three reading frames. The combinatorial diversity is considerably increased by the sequence exonuclease trimming and random nucleotide (N) region additions which occur during the V-(D)-J rearrangements. The chain is Probable non-functional T cell receptor gamma variable 11 from Homo sapiens (Human).